A 41-amino-acid polypeptide reads, in one-letter code: SPENCQGESQPCGCYCDAEGQGWPQDAEENGDIVCGEXTPC.

Belongs to the phospholipase A2 family. Group II subfamily. D49 sub-subfamily. Nigroviriditoxin is a heterodimer of an acidic subunit A and a basic subunit B. In terms of tissue distribution, expressed by the venom gland.

Its subcellular location is the secreted. Heterodimer A-B: Nigroviriditoxin possesses phospholipase A2 (PLA2) activity. It consists of a non-covalent association of a basic PLA2 subunit B with a non-enzymatic subunit A. Its function is as follows. Subunit A: The acidic subunit of nigroviriditoxin probably is a heterotrimer of three disulfide-linked chains generated by post-translational maturation of a PLA2-like precursor. It appears to have no PLA2 activity of its own, instead inhibiting the catalytic activity of subunit B. It is not toxic to mice by itself but increases toxicity of subunit B. The polypeptide is Phospholipase A2 homolog nigroviriditoxin acidic subunit A (Bothriechis nigroviridis (Black-speckled palm pit viper)).